A 316-amino-acid polypeptide reads, in one-letter code: B3 domain-containing protein Os04g0581400 (316 aa).

The segment at 1-100 is disordered; the sequence is MEFATTSSRF…GSGGGGGGED (100 aa). Acidic residues predominate over residues 13 to 36; it reads EEEEEEEGEQEMEQEQDEEEEEAE. The span at 46–77 shows a compositional bias: low complexity; it reads TSAAAAATASSSSPTSVSPSATASAAASTSAS. Gly residues predominate over residues 88 to 98; sequence GASGSGGGGGG. A DNA-binding region (TF-B3) is located at residues 110-215; sequence FDKVVTPSDV…RLFIDWKRRA (106 aa). The tract at residues 239–290 is disordered; that stretch reads GGAGASSCRPRRPPRSTSITAFARASTSATSTPLCRRGSSSSSAPQGRGFIS. The span at 253 to 270 shows a compositional bias: low complexity; it reads RSTSITAFARASTSATST.

Its subcellular location is the nucleus. The sequence is that of B3 domain-containing protein Os04g0581400 from Oryza sativa subsp. japonica (Rice).